A 309-amino-acid polypeptide reads, in one-letter code: D-galacturonate reductase (309 aa).

The active-site Proton donor is Tyr50. Substrate is bound at residue His109. 210-264 lines the NADP(+) pocket; the sequence is SPLGSTGSPLMSADPVVKIAEKKGISPTTVLLSYHVNRGSTVLAKSVTPARIKAN.

This sequence belongs to the aldo/keto reductase family.

It carries out the reaction L-galactonate + NADP(+) = aldehydo-D-galacturonate + NADPH + H(+). It functions in the pathway carbohydrate acid metabolism. Its function is as follows. Mediates the reduction of D-galacturonate to L-galactonate, the first step in D-galacturonate catabolic process. Also has activity with D-glucuronate and DL-glyceraldehyde. No activity is observed with D-glucose, D-fructose, D-xylose, D-galactose, L-arabinose or D-mannose. Activity is seen only with NADPH and not with NADH. The protein is D-galacturonate reductase (gar1) of Hypocrea jecorina (Trichoderma reesei).